An 897-amino-acid chain; its full sequence is MAQVDVTRWVIHPSGSYESETRKRKLREEKRRKLNEIKRASLVLNDSDFKNFEHWLVTSKGVGEYEQVFDFNFDAYTTRGKPAVDSSTSYSDNIFIDGDKNCKIDTKTISFLDRKYQSNNQTKIESEKQMHVITLKNEQLIEECKNIRERLLELIREGTGYIFVRGWTGYRVNTIILKCHCKQDKCHQILKPRCNVKKHHDPDNLKQFNCFSSFSVHFNVKLNTIKICFCHKSKHETLPITIIPASLRQYISTNLCFTARECFECLKRTPVYLEFTKSFDAKAIVRKIWKEISESQWNLDPDSKRSASKILKRFQNTGDVALLPVDNCSADLNISLQKAKPIAFIYERIISEIQHDVTEIVIDSTFCLSTDYKQYFVVVASFFGKGVPVGFMATETNNVDHLTILWFLRSVLQKLPKVKCINSDWSLAEIKAINLLKCSNQICLFHTLTAIRCKRLASKKNMTESLFHQQFQSLLNYEWVDDNIFDPTRYEEKYQEKVSEYQIREIVRLVRIAICDHILLHSAGLNKVFQDSDSENVKVLKLYEYHLKQLYVITVQKFSLPCYFCYLFNQYYNFTSFQIMSRVGKPTFFSVLRTSMMCESYFNQLKSWNLSGSRNYRFDTLIYILLNKEVAKIKESIRITKKFEKEYDSNCLVQNHRKHLPTWRKQWIIEWKNILQELNCLQEKDVFNECQQYGTNMTTWICGCNDAKVSPSSTCIHLVSLYKQKFPFYHGYTLQRFGKRNNGVPLVQHESLQSDTKIESTENMSFEISDVTINGVCNTTKQMSDANCRKLDYETEIDMISENKHSEIDDESEGKLRIFNFFLADEETRLLITQCPSFKSIIEEMTYIKQRTQSEPQWKAKTNKPEKGFKYDSWIRCLKYYQCYADVKANGNFPLPF.

Mating type proteins are sequence specific DNA-binding proteins that act as master switches in yeast differentiation by controlling gene expression in a cell type-specific fashion. Required for efficient mating as an alpha-cell. This chain is Mating-type protein ALPHA3 (HMLALPHA3), found in Kluyveromyces lactis (strain ATCC 8585 / CBS 2359 / DSM 70799 / NBRC 1267 / NRRL Y-1140 / WM37) (Yeast).